The primary structure comprises 70 residues: Putative membrane protein insertion efficiency factor (70 aa).

Belongs to the UPF0161 family.

It is found in the cell membrane. Functionally, could be involved in insertion of integral membrane proteins into the membrane. The protein is Putative membrane protein insertion efficiency factor of Rubrobacter xylanophilus (strain DSM 9941 / JCM 11954 / NBRC 16129 / PRD-1).